The following is a 912-amino-acid chain: Cadherin-2 (912 aa).

A signal peptide spans 1–28; it reads MCRIAGTPPRILPPLALMLLAALQQAPI. A propeptide spanning residues 29 to 164 is cleaved from the precursor; sequence KATCEDMLCK…DSSHLKRQKR (136 aa). Cadherin domains are found at residues 165 to 272, 273 to 387, 388 to 502, 503 to 609, and 610 to 720; these read DWVI…RPEF, LHQV…PPEF, TAMT…SPYF, VPNP…DNAP, and QVNP…DVDR. Over 165 to 729 the chain is Extracellular; the sequence is DWVIPPINLP…RIVGAGLGTG (565 aa). Ca(2+) is bound by residues Glu175, Asp231, Glu233, Asp264, Met265, Asn266, Asp267, and Asn268. N-linked (GlcNAc...) asparagine glycosylation is present at Asn278. Ca(2+) is bound by residues Asp298, Asp300, and Asn306. Residue Asn330 is glycosylated (N-linked (GlcNAc...) asparagine). Asp358 contributes to the Ca(2+) binding site. Residues Asn407, Asn578, Asn628, and Asn657 are each glycosylated (N-linked (GlcNAc...) asparagine). The chain crosses the membrane as a helical span at residues 730-752; it reads AIIAILLCIIILLILVLMFVVWM. Residues 753 to 912 are Cytoplasmic-facing; that stretch reads KRRDKERQAK…LADMYGGGDD (160 aa). The span at 869 to 886 shows a compositional bias: low complexity; it reads SGSTAGSLSSLNSSSSGG. Residues 869-890 are disordered; the sequence is SGSTAGSLSSLNSSSSGGEQDY.

Homodimer (via extracellular region). Can also form heterodimers with other cadherins (via extracellular region). Dimerization occurs in trans, i.e. with a cadherin chain from another cell. Interacts with CTNNA2. Expressed at intercalated disks in the heart (at protein level).

It localises to the cell membrane. The protein localises to the sarcolemma. It is found in the cell junction. Its subcellular location is the cell surface. The protein resides in the desmosome. It localises to the adherens junction. Functionally, calcium-dependent cell adhesion protein; preferentially mediates homotypic cell-cell adhesion. Cadherins may thus contribute to the sorting of heterogeneous cell types, and thereby play an important role during embryonic development. Required for proper neurite branching, and pre- and postsynaptic organization. The protein is Cadherin-2 (CDH2) of Gallus gallus (Chicken).